We begin with the raw amino-acid sequence, 329 residues long: MICNERMVIYRGAGQRVAALEDFCPHRGAPLSLGSIQDGKLVCGYHGLVMDCDGRTASMPAQRVQAFPCIRAFPAQERHGFIWVWPGDAALADPALIPHLEWAENPAWAYGGGLYHIACDYRLMIDNLMDLTHETYVHASSIGQKEIDEAPVSTRVEGDRLITGRFMEGILAPPFWRAALRGNGLADDVPVDRWQICRFTPPSHVLIEVGVAHAGRGGYDAPADCKASSIVVDFITPETDTSIWYFWGMARSFRPEDNELTARIREGQGTIFAEDLEMLEQQQRNLLAWPERPLLKLNIDAGGVQSRRIIERLVSAERAAEAQLIGRQA.

In terms of domain architecture, Rieske spans 1–84 (MICNERMVIY…AQERHGFIWV (84 aa)). [2Fe-2S] cluster-binding residues include Cys-24, His-26, Cys-43, and His-46.

The protein belongs to the bacterial ring-hydroxylating dioxygenase alpha subunit family. In terms of assembly, this demethylase system consists of two proteins: an oxygenase and an oxygenase reductase. Requires [2Fe-2S] cluster as cofactor. It depends on Fe cation as a cofactor.

It carries out the reaction vanillate + NADH + O2 + H(+) = 3,4-dihydroxybenzoate + formaldehyde + NAD(+) + H2O. The protein operates within xenobiotic degradation; vanillyl-alcohol degradation. The sequence is that of Vanillate O-demethylase oxygenase subunit (vanA) from Pseudomonas sp. (strain ATCC 19151).